Reading from the N-terminus, the 263-residue chain is MAPK-interacting and spindle-stabilizing protein (263 aa).

The disordered stretch occupies residues 13–238 (GSPAPFLPSG…LGKQQGHNTT (226 aa)). 2 stretches are compositionally biased toward pro residues: residues 14–34 (SPAP…PYPG) and 140–155 (GLQP…PPGP). The span at 156–165 (SAASPGPGSL) shows a compositional bias: low complexity. Residues 176–189 (PSDSSNPESTLEST) are compositionally biased toward polar residues. Basic residues predominate over residues 202–213 (IKRRRSKKKSKR).

The protein belongs to the MISS family. Interacts with MAPK1. Phosphorylated in vitro by MAPK1.

The protein localises to the cytoplasm. The protein resides in the cytoskeleton. Its subcellular location is the spindle. Involved in the maintenance of the spindle integrity during the cytostatic factor (CSF) arrest of oocytes. This is MAPK-interacting and spindle-stabilizing protein (Mapk1ip1) from Mus musculus (Mouse).